Here is a 179-residue protein sequence, read N- to C-terminus: Large ribosomal subunit protein uL5 (179 aa).

The protein belongs to the universal ribosomal protein uL5 family. Part of the 50S ribosomal subunit; part of the 5S rRNA/L5/L18/L25 subcomplex. Contacts the 5S rRNA and the P site tRNA. Forms a bridge to the 30S subunit in the 70S ribosome.

Its function is as follows. This is one of the proteins that bind and probably mediate the attachment of the 5S RNA into the large ribosomal subunit, where it forms part of the central protuberance. In the 70S ribosome it contacts protein S13 of the 30S subunit (bridge B1b), connecting the 2 subunits; this bridge is implicated in subunit movement. Contacts the P site tRNA; the 5S rRNA and some of its associated proteins might help stabilize positioning of ribosome-bound tRNAs. This chain is Large ribosomal subunit protein uL5, found in Vibrio parahaemolyticus serotype O3:K6 (strain RIMD 2210633).